We begin with the raw amino-acid sequence, 252 residues long: Imidazole glycerol phosphate synthase subunit HisF (252 aa).

Residues Asp11 and Asp130 contribute to the active site.

It belongs to the HisA/HisF family. Heterodimer of HisH and HisF.

The protein localises to the cytoplasm. It carries out the reaction 5-[(5-phospho-1-deoxy-D-ribulos-1-ylimino)methylamino]-1-(5-phospho-beta-D-ribosyl)imidazole-4-carboxamide + L-glutamine = D-erythro-1-(imidazol-4-yl)glycerol 3-phosphate + 5-amino-1-(5-phospho-beta-D-ribosyl)imidazole-4-carboxamide + L-glutamate + H(+). It functions in the pathway amino-acid biosynthesis; L-histidine biosynthesis; L-histidine from 5-phospho-alpha-D-ribose 1-diphosphate: step 5/9. Functionally, IGPS catalyzes the conversion of PRFAR and glutamine to IGP, AICAR and glutamate. The HisF subunit catalyzes the cyclization activity that produces IGP and AICAR from PRFAR using the ammonia provided by the HisH subunit. The polypeptide is Imidazole glycerol phosphate synthase subunit HisF (Staphylococcus aureus (strain bovine RF122 / ET3-1)).